Consider the following 302-residue polypeptide: MGRPSSGAVGQPKVRKGLWSPEEDEKLYNHIIRHGVGCWSSVPRLAALNRCGKSCRLRWINYLRPDLKRGCFSQQEEDHIVALHQILGNRWSQIASHLPGRTDNEIKNFWNSCIKKKLRQQGIDPATHKPMASADTATAAAALPDAEEEDRKPLCPAVDGSLVPKQPAVFDPFPLCVDYGAGFAEELGAANAAALYGQLCGGKEVADDDAGFGAADYSCVLDVSENLGYGESSSNSSNWNYGGEVGSVLDGEVPHWAKAEPAFAEMERQQQHSPAEQKLSLPCQEQSLLASFDFNLELEPYF.

2 HTH myb-type domains span residues 11–63 (QPKV…INYL) and 64–118 (RPDL…KKKL). DNA-binding regions (H-T-H motif) lie at residues 39–63 (WSSVPRLAALNRCGKSCRLRWINYL) and 91–114 (WSQIASHLPGRTDNEIKNFWNSCI). The interval 137–158 (ATAAAALPDAEEEDRKPLCPAV) is disordered.

In terms of tissue distribution, germinating seed and apical meristem of shoot and root.

The protein resides in the nucleus. Possible transcription activator in response to an external signal. May be involved in the regulation of flavonoid biosynthesis. The protein is Myb-related protein Hv33 (MYB2) of Hordeum vulgare (Barley).